Here is a 422-residue protein sequence, read N- to C-terminus: UDP-N-acetylglucosamine 1-carboxyvinyltransferase (422 aa).

24–25 (KN) lines the phosphoenolpyruvate pocket. Arg-93 lines the UDP-N-acetyl-alpha-D-glucosamine pocket. The Proton donor role is filled by Cys-117. Cys-117 is modified (2-(S-cysteinyl)pyruvic acid O-phosphothioketal). UDP-N-acetyl-alpha-D-glucosamine contacts are provided by residues 122-126 (RPVDL), 162-165 (KVSV), Asp-307, and Ile-329.

It belongs to the EPSP synthase family. MurA subfamily.

It localises to the cytoplasm. The enzyme catalyses phosphoenolpyruvate + UDP-N-acetyl-alpha-D-glucosamine = UDP-N-acetyl-3-O-(1-carboxyvinyl)-alpha-D-glucosamine + phosphate. It functions in the pathway cell wall biogenesis; peptidoglycan biosynthesis. Cell wall formation. Adds enolpyruvyl to UDP-N-acetylglucosamine. The polypeptide is UDP-N-acetylglucosamine 1-carboxyvinyltransferase (Vibrio atlanticus (strain LGP32) (Vibrio splendidus (strain Mel32))).